Here is a 272-residue protein sequence, read N- to C-terminus: 5'-nucleotidase SurE (272 aa).

The a divalent metal cation site is built by D28, D29, S59, and N115.

It belongs to the SurE nucleotidase family. The cofactor is a divalent metal cation.

The protein resides in the cytoplasm. It carries out the reaction a ribonucleoside 5'-phosphate + H2O = a ribonucleoside + phosphate. Its function is as follows. Nucleotidase that shows phosphatase activity on nucleoside 5'-monophosphates. This Chlorobium chlorochromatii (strain CaD3) protein is 5'-nucleotidase SurE.